Reading from the N-terminus, the 389-residue chain is Chalcone synthase A (389 aa).

Cys164 is an active-site residue.

Belongs to the thiolase-like superfamily. Chalcone/stilbene synthases family. As to expression, major expressed member of the gene family in various floral tissues and in seedlings treated with UV light. It is relatively low expressed in tissue culture material.

The enzyme catalyses (E)-4-coumaroyl-CoA + 3 malonyl-CoA + 3 H(+) = 2',4,4',6'-tetrahydroxychalcone + 3 CO2 + 4 CoA. The protein operates within secondary metabolite biosynthesis; flavonoid biosynthesis. Its function is as follows. The primary product of this enzyme is 4,2',4',6'-tetrahydroxychalcone (also termed naringenin-chalcone or chalcone) which can under specific conditions spontaneously isomerize into naringenin. The chain is Chalcone synthase A (CHSA) from Petunia hybrida (Petunia).